A 36-amino-acid chain; its full sequence is Pancreatic polypeptide (36 aa).

Tyrosine 36 is modified (tyrosine amide).

Belongs to the NPY family.

It localises to the secreted. In terms of biological role, hormone secreted by pancreatic cells that acts as a regulator of pancreatic and gastrointestinal functions probably by signaling through the G protein-coupled receptor NPY4R2. The protein is Pancreatic polypeptide (PPY) of Erinaceus europaeus (Western European hedgehog).